Consider the following 473-residue polypeptide: Photosystem II CP43 reaction center protein (473 aa).

Positions 1–14 are excised as a propeptide; that stretch reads MKILYSQRRFYHVE. Helical transmembrane passes span 69–93, 134–155, 178–200, 255–275, and 291–312; these read LFEV…PHLA, LIGP…RDKN, KAMF…RYIN, KPFG…LSYS, and WYNN…ASQA. Glutamate 367 contributes to the [CaMn4O5] cluster binding site. A helical transmembrane segment spans residues 447 to 471; that stretch reads RARAAAAGFEKGINRENEPVLSMKL.

Belongs to the PsbB/PsbC family. PsbC subfamily. In terms of assembly, PSII is composed of 1 copy each of membrane proteins PsbA, PsbB, PsbC, PsbD, PsbE, PsbF, PsbH, PsbI, PsbJ, PsbK, PsbL, PsbM, PsbT, PsbY, PsbZ, Psb30/Ycf12, at least 3 peripheral proteins of the oxygen-evolving complex and a large number of cofactors. It forms dimeric complexes. Binds multiple chlorophylls and provides some of the ligands for the Ca-4Mn-5O cluster of the oxygen-evolving complex. It may also provide a ligand for a Cl- that is required for oxygen evolution. PSII binds additional chlorophylls, carotenoids and specific lipids. is required as a cofactor.

Its subcellular location is the plastid. The protein localises to the chloroplast thylakoid membrane. Functionally, one of the components of the core complex of photosystem II (PSII). It binds chlorophyll and helps catalyze the primary light-induced photochemical processes of PSII. PSII is a light-driven water:plastoquinone oxidoreductase, using light energy to abstract electrons from H(2)O, generating O(2) and a proton gradient subsequently used for ATP formation. The protein is Photosystem II CP43 reaction center protein of Galdieria sulphuraria (Red alga).